A 579-amino-acid polypeptide reads, in one-letter code: Glypican-3 (579 aa).

A signal peptide spans 1-24 (MAGTVRTACLLVAMLLGLGCLGQA). Position 25 is a pyrrolidone carboxylic acid (glutamine 25). 7 disulfide bridges follow: cysteine 34-cysteine 71, cysteine 64-cysteine 261, cysteine 72-cysteine 264, cysteine 196-cysteine 348, cysteine 251-cysteine 284, cysteine 273-cysteine 421, and cysteine 277-cysteine 409. N-linked (GlcNAc...) asparagine glycans are attached at residues asparagine 123 and asparagine 240. Serine 351 carries the phosphoserine modification. Asparagine 417 carries an N-linked (GlcNAc...) asparagine glycan. O-linked (Xyl...) (glycosaminoglycan) serine glycans are attached at residues serine 494 and serine 508. The segment at 533–552 (DAPGNKQHGNQKDNEITTSH) is disordered. A lipid anchor (GPI-anchor amidated serine) is attached at serine 553. Residues 554–579 (VGNMPSPLKILISVAIYVACFFFLVH) constitute a propeptide, removed in mature form.

Belongs to the glypican family. As to quaternary structure, heterodimer; disulfide-linked. Cleavage by a furin-like convertase results in production of alpha and beta chains which form a disulfide-linked heterodimer. Interacts with DPP4. Interacts with FGF2. Interacts with WNT5A. Also interacts with WNT3A and WNT7B. Interacts with hedgehog protein SHH; the heparan sulfate chains are not required for the interaction. Also interacts with hedgehog protein IHH. Interacts with CD81. Interacts with Wnt receptors FZD4, FZD7 and FZD8; the heparan sulfate chains are required for the interaction. O-glycosylated; contains heparan sulfate and/or chondroitin sulfate. In terms of processing, cleaved intracellularly by a furin-like convertase to generate 2 subunits, alpha and beta, which remain associated through disulfide bonds and are associated with the cell surface via the GPI-anchor. This processing is essential for its role in inhibition of hedgehog signaling. A second proteolytic event may result in cleavage of the protein on the cell surface, separating it from the GPI-anchor and leading to its shedding from the cell surface. In terms of tissue distribution, in the developing limb, absent from the apical epidermal ridge at 11 dpc but highly expressed in the underlying mesenchyme. Expression in the mesenchyme at this stage is asymmetric with highest levels in the regions of the distal mesenchyme within the progress zone and within the proximal anterior and posterior limb bud. At later developmental stages including 12.5 and 13.5 dpc, expression is restricted to the interdigital webs and the regions of chondrocytic differentiation of the developing bones. In the embryonic kidney, expressed in both the ureteric bud and mesenchymal cells as early as 13.5 dpc. Expression at 16.5 dpc is similar to that at 13.5 dpc but decreases by 18.5 dpc.

Its subcellular location is the cell membrane. Functionally, cell surface proteoglycan. Negatively regulates the hedgehog signaling pathway when attached via the GPI-anchor to the cell surface by competing with the hedgehog receptor PTC1 for binding to hedgehog proteins. Binding to the hedgehog protein SHH triggers internalization of the complex by endocytosis and its subsequent lysosomal degradation. Positively regulates the canonical Wnt signaling pathway by binding to the Wnt receptor Frizzled and stimulating the binding of the Frizzled receptor to Wnt ligands. Positively regulates the non-canonical Wnt signaling pathway. Binds to CD81 which decreases the availability of free CD81 for binding to the transcriptional repressor HHEX, resulting in nuclear translocation of HHEX and transcriptional repression. Inhibits the dipeptidyl peptidase activity of DPP4. Plays a role in limb patterning and skeletal development by controlling the cellular response to BMP4. Modulates the effects of growth factors BMP2, BMP7 and FGF7 on renal branching morphogenesis. Required for coronary vascular development. Plays a role in regulating cell movements during gastrulation. This Mus musculus (Mouse) protein is Glypican-3 (Gpc3).